The following is a 328-amino-acid chain: tRNA uridine(34) hydroxylase (328 aa).

Residues 130–224 (LDEDTVVLDT…YGKDPEVQGE (95 aa)) enclose the Rhodanese domain. The active-site Cysteine persulfide intermediate is the C184.

Belongs to the TrhO family.

It catalyses the reaction uridine(34) in tRNA + AH2 + O2 = 5-hydroxyuridine(34) in tRNA + A + H2O. In terms of biological role, catalyzes oxygen-dependent 5-hydroxyuridine (ho5U) modification at position 34 in tRNAs. This Streptococcus pyogenes serotype M12 (strain MGAS2096) protein is tRNA uridine(34) hydroxylase.